The following is a 543-amino-acid chain: MSRESDVEAQQSHGSSACSQPHGSVTQSQGSSSQSQGISSSSTSTMPNSSQSSHSSSGTLSSLETVSTQELYSIPEDQEPEDQEPEEPTPAPWARLWALQDGFANLECVNDNYWFGRDKSCEYCFDEPLLKRTDKYRTYSKKHFRIFREVGPKNSYIAYIEDHSGNGTFVNTELVGKGKRRPLNNNSEIALSLSRNKVFVFFDLTVDDQSVYPKALRDEYIMSKTLGSGACGEVKLAFERKTCKKVAIKIISKRKFAIGSAREADPALNVETEIEILKKLNHPCIIKIKNFFDAEDYYIVLELMEGGELFDKVVGNKRLKEATCKLYFYQMLLAVQYLHENGIIHRDLKPENVLLSSQEEDCLIKITDFGHSKILGETSLMRTLCGTPTYLAPEVLVSVGTAGYNRAVDCWSLGVILFICLSGYPPFSEHRTQVSLKDQITSGKYNFIPEVWAEVSEKALDLVKKLLVVDPKARFTTEEALRHPWLQDEDMKRKFQDLLSEENESTALPQVLAQPSTSRKRPREGEAEGAETTKRPAVCAAVL.

The segment at 1-66 (MSRESDVEAQ…SGTLSSLETV (66 aa)) is disordered. Over residues 8-22 (EAQQSHGSSACSQPH) the composition is skewed to polar residues. Low complexity predominate over residues 23–62 (GSVTQSQGSSSQSQGISSSSTSTMPNSSQSSHSSSGTLSS). The residue at position 62 (Ser62) is a Phosphoserine; by PLK3. Thr68 is subject to Phosphothreonine; by ATM and MAP3K20. Phosphoserine; by PLK3 is present on Ser73. Residues 113–175 (YWFGRDKSCE…NGTFVNTELV (63 aa)) form the FHA domain. One can recognise a Protein kinase domain in the interval 220–486 (YIMSKTLGSG…TEEALRHPWL (267 aa)). Residues 227–234 (GSGACGEV), Lys249, and 302–308 (ELMEGGE) contribute to the ATP site. Asp347 (proton acceptor) is an active-site residue. ATP is bound by residues 351–352 (EN) and Asp368. Residues 368–394 (DFGHSKILGETSLMRTLCGTPTYLAPE) are T-loop/activation segment. Residue Ser379 is modified to Phosphoserine; by autocatalysis. 2 positions are modified to phosphothreonine; by autocatalysis: Thr383 and Thr387. Ser456 bears the Phosphoserine mark. Over residues 506 to 517 (TALPQVLAQPST) the composition is skewed to polar residues. The disordered stretch occupies residues 506-538 (TALPQVLAQPSTSRKRPREGEAEGAETTKRPAV). Basic and acidic residues predominate over residues 523 to 534 (REGEAEGAETTK).

The protein belongs to the protein kinase superfamily. CAMK Ser/Thr protein kinase family. CHK2 subfamily. In terms of assembly, homodimer. Homodimerization is part of the activation process but the dimer may dissociate following activation. Interacts with PML. Interacts with TP53. Interacts with RB1; phosphorylates RB1. Interacts with BRCA1. Interacts (phosphorylated at Thr-68) with MDC1; requires ATM-mediated phosphorylation of CHEK2. Interacts with TP53BP1; modulates CHEK2 phosphorylation at Thr-68 in response to ionizing radiation. Interacts with CDC25A; phosphorylates CDC25A and mediates its degradation in response to ionizing radiation. Interacts with CUL1; mediates CHEK2 ubiquitination and regulation. Interacts with CDKN2AIP. Interacts (via protein kinase domain) with CCAR2 (via N-terminus). Interacts with SIRT1. Requires Mg(2+) as cofactor. In terms of processing, phosphorylated. Phosphorylated at Ser-73 by PLK3 in response to DNA damage, promoting phosphorylation at Thr-68 by ATM and the G2/M transition checkpoint. Phosphorylation at Thr-68 induces homodimerization. Autophosphorylates at Thr-383 and Thr-387 in the T-loop/activation segment upon dimerization to become fully active and phosphorylate its substrates like for instance CDC25C. DNA damage-induced autophosphorylation at Ser-379 induces CUL1-mediated ubiquitination and regulates the pro-apoptotic function. Phosphorylation at Ser-456 also regulates ubiquitination. Phosphorylated by PLK4. Post-translationally, ubiquitinated. CUL1-mediated ubiquitination regulates the pro-apoptotic function. Ubiquitination may also regulate protein stability. Ubiquitinated by RNF8 via 'Lys-48'-linked ubiquitination. As to expression, high expression is found in testis, spleen, colon and peripheral blood leukocytes. Low expression is found in other tissues.

It localises to the nucleus. The protein localises to the PML body. The protein resides in the nucleoplasm. The enzyme catalyses L-seryl-[protein] + ATP = O-phospho-L-seryl-[protein] + ADP + H(+). It catalyses the reaction L-threonyl-[protein] + ATP = O-phospho-L-threonyl-[protein] + ADP + H(+). Activated through phosphorylation at Thr-68 by ATM in response to DNA double-strand breaks. Activation is modulated by several mediators including MDC1 and TP53BP1. Induces homodimerization with exchange of the T-loop/activation segment between protomers and transphosphorylation of the protomers. The autophosphorylated kinase dimer is fully active. Negatively regulated by PPM1D through dephosphorylation of Thr-68. In terms of biological role, serine/threonine-protein kinase which is required for checkpoint-mediated cell cycle arrest, activation of DNA repair and apoptosis in response to the presence of DNA double-strand breaks. May also negatively regulate cell cycle progression during unperturbed cell cycles. Following activation, phosphorylates numerous effectors preferentially at the consensus sequence [L-X-R-X-X-S/T]. Regulates cell cycle checkpoint arrest through phosphorylation of CDC25A, CDC25B and CDC25C, inhibiting their activity. Inhibition of CDC25 phosphatase activity leads to increased inhibitory tyrosine phosphorylation of CDK-cyclin complexes and blocks cell cycle progression. May also phosphorylate NEK6 which is involved in G2/M cell cycle arrest. Regulates DNA repair through phosphorylation of BRCA2, enhancing the association of RAD51 with chromatin which promotes DNA repair by homologous recombination. Also stimulates the transcription of genes involved in DNA repair (including BRCA2) through the phosphorylation and activation of the transcription factor FOXM1. Regulates apoptosis through the phosphorylation of p53/TP53, MDM4 and PML. Phosphorylation of p53/TP53 at 'Ser-20' by CHEK2 may alleviate inhibition by MDM2, leading to accumulation of active p53/TP53. Phosphorylation of MDM4 may also reduce degradation of p53/TP53. Also controls the transcription of pro-apoptotic genes through phosphorylation of the transcription factor E2F1. Tumor suppressor, it may also have a DNA damage-independent function in mitotic spindle assembly by phosphorylating BRCA1. Its absence may be a cause of the chromosomal instability observed in some cancer cells. Promotes the CCAR2-SIRT1 association and is required for CCAR2-mediated SIRT1 inhibition. Under oxidative stress, promotes ATG7 ubiquitination by phosphorylating the E3 ubiquitin ligase TRIM32 at 'Ser-55' leading to positive regulation of the autophagosme assembly. (Microbial infection) Phosphorylates herpes simplex virus 1/HHV-1 protein ICP0 and thus activates its SUMO-targeted ubiquitin ligase activity. This is Serine/threonine-protein kinase Chk2 from Homo sapiens (Human).